Reading from the N-terminus, the 217-residue chain is Probable transaldolase (217 aa).

K83 acts as the Schiff-base intermediate with substrate in catalysis.

It belongs to the transaldolase family. Type 3B subfamily.

The protein localises to the cytoplasm. The enzyme catalyses D-sedoheptulose 7-phosphate + D-glyceraldehyde 3-phosphate = D-erythrose 4-phosphate + beta-D-fructose 6-phosphate. It functions in the pathway carbohydrate degradation; pentose phosphate pathway; D-glyceraldehyde 3-phosphate and beta-D-fructose 6-phosphate from D-ribose 5-phosphate and D-xylulose 5-phosphate (non-oxidative stage): step 2/3. Its function is as follows. Transaldolase is important for the balance of metabolites in the pentose-phosphate pathway. This is Probable transaldolase from Bartonella quintana (strain Toulouse) (Rochalimaea quintana).